A 453-amino-acid polypeptide reads, in one-letter code: Magnesium transporter MgtE (453 aa).

The Cytoplasmic segment spans residues 1–286 (MNEGQEMEEQ…ENPLKAASKR (286 aa)). Mg(2+) is bound by residues Glu-71, Asp-98, Asp-102, Glu-136, Ala-140, Tyr-176, Arg-227, Asp-230, Ala-233, Asp-251, and Glu-259. CBS domains lie at 142–205 (MTTE…IADI) and 206–262 (LNER…EAAS). A helical membrane pass occupies residues 287 to 307 (LPWLITLLFLGMSTASLISNY). Glu-308 is a topological domain (extracellular). A helical transmembrane segment spans residues 309–329 (SLVSEASILAVFISLITGTAG). Over 330–360 (NAGTQSLAVAVRRLAMKDEKDSNFGRLILSE) the chain is Cytoplasmic. Residues 361-381 (VLTGLVTGAVTGLTIMIVVGV) form a helical membrane-spanning segment. Topologically, residues 382-389 (WQHNLPLG) are extracellular. Residues 390–410 (FVIGMAMLCAITVANLAGSLI) form a helical membrane-spanning segment. At 411–427 (PMLMDKLGFDPAVASGP) the chain is on the cytoplasmic side. A helical transmembrane segment spans residues 428-448 (FITTLSDLTSVLIYFNIASMF). Asp-434 contributes to the Mg(2+) binding site. Over 449–453 (MRYFV) the chain is Extracellular.

The protein belongs to the SLC41A transporter family. As to quaternary structure, homodimer.

The protein resides in the cell membrane. The enzyme catalyses Mg(2+)(in) = Mg(2+)(out). In terms of biological role, acts as a magnesium transporter. The sequence is that of Magnesium transporter MgtE from Enterococcus faecalis (strain ATCC 700802 / V583).